We begin with the raw amino-acid sequence, 131 residues long: Small ribosomal subunit protein bS6 (131 aa).

The segment at 98 to 131 is disordered; the sequence is EASPMVKAKDERRERREDFANETSEETEAGDSEE. The segment covering 104 to 116 has biased composition (basic and acidic residues); that stretch reads KAKDERRERREDF. A compositionally biased stretch (acidic residues) spans 120 to 131; it reads TSEETEAGDSEE.

Belongs to the bacterial ribosomal protein bS6 family.

Functionally, binds together with bS18 to 16S ribosomal RNA. This Edwardsiella ictaluri (strain 93-146) protein is Small ribosomal subunit protein bS6.